Here is a 72-residue protein sequence, read N- to C-terminus: Translation initiation factor IF-1 (72 aa).

The S1-like domain occupies 1–72; the sequence is MAKEDTLEFP…TKGRINYRFK (72 aa).

This sequence belongs to the IF-1 family. Component of the 30S ribosomal translation pre-initiation complex which assembles on the 30S ribosome in the order IF-2 and IF-3, IF-1 and N-formylmethionyl-tRNA(fMet); mRNA recruitment can occur at any time during PIC assembly.

The protein resides in the cytoplasm. Its function is as follows. One of the essential components for the initiation of protein synthesis. Stabilizes the binding of IF-2 and IF-3 on the 30S subunit to which N-formylmethionyl-tRNA(fMet) subsequently binds. Helps modulate mRNA selection, yielding the 30S pre-initiation complex (PIC). Upon addition of the 50S ribosomal subunit IF-1, IF-2 and IF-3 are released leaving the mature 70S translation initiation complex. The protein is Translation initiation factor IF-1 of Ruegeria sp. (strain TM1040) (Silicibacter sp.).